A 462-amino-acid chain; its full sequence is 3-ketoacyl CoA thiolase 1, peroxisomal (462 aa).

A peroxisome-targeting transit peptide spans 1-34 (MEKAIQRQRVLLEHLQPIRHHTHDHSSSLTTSIC). The Acyl-thioester intermediate role is filled by C138. Residues H393 and C425 each act as proton acceptor in the active site. G427 lines the substrate pocket.

It belongs to the thiolase-like superfamily. Thiolase family. As to quaternary structure, homodimer.

The protein localises to the peroxisome. It carries out the reaction an acyl-CoA + acetyl-CoA = a 3-oxoacyl-CoA + CoA. It functions in the pathway aromatic compound metabolism. It participates in lipid metabolism; fatty acid metabolism. Functionally, component of the floral volatile benzenoid/phenylpropanoid (FVBP) biosynthetic pathway. Thiolase that catalyzes the conversion of 3-oxo-3-phenylpropionyl-CoA (benzoylacetyl-CoA) to benzoyl-CoA. The chain is 3-ketoacyl CoA thiolase 1, peroxisomal from Petunia hybrida (Petunia).